Reading from the N-terminus, the 507-residue chain is Histidine ammonia-lyase (507 aa).

A cross-link (5-imidazolinone (Ala-Gly)) is located at residues 141–143 (ASG). S142 is modified (2,3-didehydroalanine (Ser)).

This sequence belongs to the PAL/histidase family. In terms of processing, contains an active site 4-methylidene-imidazol-5-one (MIO), which is formed autocatalytically by cyclization and dehydration of residues Ala-Ser-Gly.

The protein resides in the cytoplasm. The enzyme catalyses L-histidine = trans-urocanate + NH4(+). It participates in amino-acid degradation; L-histidine degradation into L-glutamate; N-formimidoyl-L-glutamate from L-histidine: step 1/3. In Burkholderia vietnamiensis (strain G4 / LMG 22486) (Burkholderia cepacia (strain R1808)), this protein is Histidine ammonia-lyase.